A 224-amino-acid polypeptide reads, in one-letter code: dTTP/UTP pyrophosphatase (224 aa).

Catalysis depends on Asp77, which acts as the Proton acceptor.

This sequence belongs to the Maf family. YhdE subfamily. The cofactor is a divalent metal cation.

The protein resides in the cytoplasm. The catalysed reaction is dTTP + H2O = dTMP + diphosphate + H(+). The enzyme catalyses UTP + H2O = UMP + diphosphate + H(+). Functionally, nucleoside triphosphate pyrophosphatase that hydrolyzes dTTP and UTP. May have a dual role in cell division arrest and in preventing the incorporation of modified nucleotides into cellular nucleic acids. This Dehalococcoides mccartyi (strain CBDB1) protein is dTTP/UTP pyrophosphatase.